A 270-amino-acid chain; its full sequence is 3-methyl-2-oxobutanoate hydroxymethyltransferase (270 aa).

Positions 43 and 82 each coordinate Mg(2+). Residues 43–44, Asp82, and Lys112 contribute to the 3-methyl-2-oxobutanoate site; that span reads DS. Position 114 (Glu114) interacts with Mg(2+). The active-site Proton acceptor is the Glu179.

This sequence belongs to the PanB family. In terms of assembly, homodecamer; pentamer of dimers. It depends on Mg(2+) as a cofactor.

It localises to the cytoplasm. It catalyses the reaction 3-methyl-2-oxobutanoate + (6R)-5,10-methylene-5,6,7,8-tetrahydrofolate + H2O = 2-dehydropantoate + (6S)-5,6,7,8-tetrahydrofolate. It participates in cofactor biosynthesis; (R)-pantothenate biosynthesis; (R)-pantoate from 3-methyl-2-oxobutanoate: step 1/2. In terms of biological role, catalyzes the reversible reaction in which hydroxymethyl group from 5,10-methylenetetrahydrofolate is transferred onto alpha-ketoisovalerate to form ketopantoate. This Staphylococcus carnosus (strain TM300) protein is 3-methyl-2-oxobutanoate hydroxymethyltransferase.